The following is a 290-amino-acid chain: Acetylglutamate kinase (290 aa).

Substrate contacts are provided by residues 60–61 (GG), Arg82, and Asn185.

This sequence belongs to the acetylglutamate kinase family. ArgB subfamily.

It localises to the cytoplasm. The catalysed reaction is N-acetyl-L-glutamate + ATP = N-acetyl-L-glutamyl 5-phosphate + ADP. The protein operates within amino-acid biosynthesis; L-arginine biosynthesis; N(2)-acetyl-L-ornithine from L-glutamate: step 2/4. Its function is as follows. Catalyzes the ATP-dependent phosphorylation of N-acetyl-L-glutamate. The protein is Acetylglutamate kinase of Archaeoglobus fulgidus (strain ATCC 49558 / DSM 4304 / JCM 9628 / NBRC 100126 / VC-16).